We begin with the raw amino-acid sequence, 249 residues long: Probable hydroxyacylglutathione hydrolase ECU02_0580 (249 aa).

His75, His77, Asp79, His80, His126, Asp144, and His183 together coordinate Zn(2+). Residues 183-185 and 240-243 contribute to the substrate site; these read HDY and RERK.

Belongs to the metallo-beta-lactamase superfamily. Glyoxalase II family. The cofactor is Zn(2+).

The protein resides in the cytoplasm. It is found in the nucleus. It catalyses the reaction an S-(2-hydroxyacyl)glutathione + H2O = a 2-hydroxy carboxylate + glutathione + H(+). It functions in the pathway secondary metabolite metabolism; methylglyoxal degradation; (R)-lactate from methylglyoxal: step 2/2. Thiolesterase that catalyzes the hydrolysis of S-D-lactoyl-glutathione to form glutathione and D-lactic acid. The polypeptide is Probable hydroxyacylglutathione hydrolase ECU02_0580 (Encephalitozoon cuniculi (strain GB-M1) (Microsporidian parasite)).